The sequence spans 373 residues: Valienol-1-phosphate guanylyltransferase (373 aa).

Substrate contacts are provided by residues Gly177 and 192 to 193 (EK).

The protein belongs to the bacterial/plant glucose-1-phosphate adenylyltransferase family. Requires Mg(2+) as cofactor.

The catalysed reaction is valienol 1-phosphate + GTP + H(+) = GDP-valienol + diphosphate. Functionally, involved in the biosynthesis of the antifungal agent validamycin A. Catalyzes the conversion of valienol 1-phosphate to GDP-valienol and less effectively to ADP-valienol or other NDP derivatives. The chain is Valienol-1-phosphate guanylyltransferase from Streptomyces hygroscopicus subsp. limoneus.